A 512-amino-acid chain; its full sequence is Cobyric acid synthase (512 aa).

Positions 254–455 constitute a GATase cobBQ-type domain; it reads EIDIAVVKLP…LHGLFDNKAL (202 aa). Cys-335 functions as the Nucleophile in the catalytic mechanism. Residue His-447 is part of the active site.

The protein belongs to the CobB/CobQ family. CobQ subfamily.

It functions in the pathway cofactor biosynthesis; adenosylcobalamin biosynthesis. Catalyzes amidations at positions B, D, E, and G on adenosylcobyrinic A,C-diamide. NH(2) groups are provided by glutamine, and one molecule of ATP is hydrogenolyzed for each amidation. The protein is Cobyric acid synthase of Desulforamulus reducens (strain ATCC BAA-1160 / DSM 100696 / MI-1) (Desulfotomaculum reducens).